A 431-amino-acid polypeptide reads, in one-letter code: Serine--tRNA ligase (431 aa).

237-239 (TAE) contacts L-serine. 268-270 (RSE) is a binding site for ATP. Glu-291 is a binding site for L-serine. Position 355 to 358 (355 to 358 (EISS)) interacts with ATP. Ser-390 is a binding site for L-serine.

The protein belongs to the class-II aminoacyl-tRNA synthetase family. Type-1 seryl-tRNA synthetase subfamily. Homodimer. The tRNA molecule binds across the dimer.

The protein resides in the cytoplasm. It catalyses the reaction tRNA(Ser) + L-serine + ATP = L-seryl-tRNA(Ser) + AMP + diphosphate + H(+). It carries out the reaction tRNA(Sec) + L-serine + ATP = L-seryl-tRNA(Sec) + AMP + diphosphate + H(+). Its pathway is aminoacyl-tRNA biosynthesis; selenocysteinyl-tRNA(Sec) biosynthesis; L-seryl-tRNA(Sec) from L-serine and tRNA(Sec): step 1/1. In terms of biological role, catalyzes the attachment of serine to tRNA(Ser). Is also able to aminoacylate tRNA(Sec) with serine, to form the misacylated tRNA L-seryl-tRNA(Sec), which will be further converted into selenocysteinyl-tRNA(Sec). This chain is Serine--tRNA ligase, found in Neisseria meningitidis serogroup A / serotype 4A (strain DSM 15465 / Z2491).